We begin with the raw amino-acid sequence, 293 residues long: Pyridoxal 5'-phosphate synthase subunit PdxS (293 aa).

Asp-23 is a D-ribose 5-phosphate binding site. Lys-80 functions as the Schiff-base intermediate with D-ribose 5-phosphate in the catalytic mechanism. Gly-152 lines the D-ribose 5-phosphate pocket. Arg-164 is a D-glyceraldehyde 3-phosphate binding site. D-ribose 5-phosphate contacts are provided by residues Gly-213 and 234–235 (GS).

This sequence belongs to the PdxS/SNZ family. As to quaternary structure, in the presence of PdxT, forms a dodecamer of heterodimers.

It catalyses the reaction aldehydo-D-ribose 5-phosphate + D-glyceraldehyde 3-phosphate + L-glutamine = pyridoxal 5'-phosphate + L-glutamate + phosphate + 3 H2O + H(+). The protein operates within cofactor biosynthesis; pyridoxal 5'-phosphate biosynthesis. In terms of biological role, catalyzes the formation of pyridoxal 5'-phosphate from ribose 5-phosphate (RBP), glyceraldehyde 3-phosphate (G3P) and ammonia. The ammonia is provided by the PdxT subunit. Can also use ribulose 5-phosphate and dihydroxyacetone phosphate as substrates, resulting from enzyme-catalyzed isomerization of RBP and G3P, respectively. This Niallia circulans (Bacillus circulans) protein is Pyridoxal 5'-phosphate synthase subunit PdxS.